Consider the following 420-residue polypeptide: Gamma-glutamyl phosphate reductase (420 aa).

This sequence belongs to the gamma-glutamyl phosphate reductase family.

Its subcellular location is the cytoplasm. The enzyme catalyses L-glutamate 5-semialdehyde + phosphate + NADP(+) = L-glutamyl 5-phosphate + NADPH + H(+). It participates in amino-acid biosynthesis; L-proline biosynthesis; L-glutamate 5-semialdehyde from L-glutamate: step 2/2. Its function is as follows. Catalyzes the NADPH-dependent reduction of L-glutamate 5-phosphate into L-glutamate 5-semialdehyde and phosphate. The product spontaneously undergoes cyclization to form 1-pyrroline-5-carboxylate. This is Gamma-glutamyl phosphate reductase from Shewanella denitrificans (strain OS217 / ATCC BAA-1090 / DSM 15013).